The sequence spans 1807 residues: Phospholipase D (1807 aa).

Positions 1 to 28 (MPGPDDDVREPTAAARTNNSGYGLRAAP) are disordered. 3 consecutive transmembrane segments (helical) span residues 257 to 277 (IAFV…IVTS), 305 to 325 (AGVF…VFVY), and 587 to 607 (VYYI…GFLA). The disordered stretch occupies residues 697–734 (TASRMGTGNLAPASSRVDSSTQSEDSFEAPKPPPSSVS). PLD phosphodiesterase domains lie at 853 to 880 (GFWS…CFGR) and 1249 to 1276 (EQIY…NDRS). Residues His-858, Lys-860, Asp-865, His-1254, Lys-1256, and Asp-1261 contribute to the active site. Polar residues-rich tracts occupy residues 1531-1547 (FSRS…SQLD), 1568-1578 (YNSNSMPSNAS), and 1597-1614 (YPNS…QSPA). A disordered region spans residues 1531 to 1621 (FSRSNSVSTP…SPAIATGARS (91 aa)).

This sequence belongs to the phospholipase D family. TM-PLD subfamily.

The protein resides in the membrane. It carries out the reaction a 1,2-diacyl-sn-glycero-3-phosphocholine + H2O = a 1,2-diacyl-sn-glycero-3-phosphate + choline + H(+). In terms of biological role, hydrolyzes glycerol-phospholipids at the terminal phosphodiesteric bond. This is Phospholipase D from Phytophthora infestans (Potato late blight agent).